Consider the following 452-residue polypeptide: Pup--protein ligase (452 aa).

E9 contacts Mg(2+). R53 is a binding site for ATP. Residue Y55 participates in Mg(2+) binding. Catalysis depends on D57, which acts as the Proton acceptor. E63 provides a ligand contact to Mg(2+). ATP contacts are provided by T66 and W419.

Belongs to the Pup ligase/Pup deamidase family. Pup-conjugating enzyme subfamily.

It catalyses the reaction ATP + [prokaryotic ubiquitin-like protein]-L-glutamate + [protein]-L-lysine = ADP + phosphate + N(6)-([prokaryotic ubiquitin-like protein]-gamma-L-glutamyl)-[protein]-L-lysine.. Its pathway is protein degradation; proteasomal Pup-dependent pathway. It participates in protein modification; protein pupylation. Functionally, catalyzes the covalent attachment of the prokaryotic ubiquitin-like protein modifier Pup to the proteasomal substrate proteins, thereby targeting them for proteasomal degradation. This tagging system is termed pupylation. The ligation reaction involves the side-chain carboxylate of the C-terminal glutamate of Pup and the side-chain amino group of a substrate lysine. This chain is Pup--protein ligase, found in Salinispora arenicola (strain CNS-205).